A 201-amino-acid polypeptide reads, in one-letter code: 3-isopropylmalate dehydratase small subunit (201 aa).

It belongs to the LeuD family. LeuD type 1 subfamily. In terms of assembly, heterodimer of LeuC and LeuD.

The enzyme catalyses (2R,3S)-3-isopropylmalate = (2S)-2-isopropylmalate. It functions in the pathway amino-acid biosynthesis; L-leucine biosynthesis; L-leucine from 3-methyl-2-oxobutanoate: step 2/4. In terms of biological role, catalyzes the isomerization between 2-isopropylmalate and 3-isopropylmalate, via the formation of 2-isopropylmaleate. In Cronobacter sakazakii (strain ATCC BAA-894) (Enterobacter sakazakii), this protein is 3-isopropylmalate dehydratase small subunit.